The chain runs to 389 residues: Phospho-N-acetylmuramoyl-pentapeptide-transferase (389 aa).

10 consecutive transmembrane segments (helical) span residues 25-45 (RAVM…PWVI), 73-93 (TMGG…WGDL), 97-117 (FIWI…VDDY), 135-155 (FWQS…VSEA), 190-210 (ISYP…IVGA), 222-242 (GLVI…AYVM), 258-278 (GAGE…AFLW), 286-306 (VFMG…VAVI), 311-331 (IVLF…MLQV), and 366-386 (QVVV…LSTL).

Belongs to the glycosyltransferase 4 family. MraY subfamily. The cofactor is Mg(2+).

It localises to the cell inner membrane. The enzyme catalyses UDP-N-acetyl-alpha-D-muramoyl-L-alanyl-gamma-D-glutamyl-meso-2,6-diaminopimeloyl-D-alanyl-D-alanine + di-trans,octa-cis-undecaprenyl phosphate = di-trans,octa-cis-undecaprenyl diphospho-N-acetyl-alpha-D-muramoyl-L-alanyl-D-glutamyl-meso-2,6-diaminopimeloyl-D-alanyl-D-alanine + UMP. The protein operates within cell wall biogenesis; peptidoglycan biosynthesis. Functionally, catalyzes the initial step of the lipid cycle reactions in the biosynthesis of the cell wall peptidoglycan: transfers peptidoglycan precursor phospho-MurNAc-pentapeptide from UDP-MurNAc-pentapeptide onto the lipid carrier undecaprenyl phosphate, yielding undecaprenyl-pyrophosphoryl-MurNAc-pentapeptide, known as lipid I. This Burkholderia multivorans (strain ATCC 17616 / 249) protein is Phospho-N-acetylmuramoyl-pentapeptide-transferase.